We begin with the raw amino-acid sequence, 119 residues long: Large ribosomal subunit protein bL20 (119 aa).

It belongs to the bacterial ribosomal protein bL20 family.

Binds directly to 23S ribosomal RNA and is necessary for the in vitro assembly process of the 50S ribosomal subunit. It is not involved in the protein synthesizing functions of that subunit. The chain is Large ribosomal subunit protein bL20 from Azorhizobium caulinodans (strain ATCC 43989 / DSM 5975 / JCM 20966 / LMG 6465 / NBRC 14845 / NCIMB 13405 / ORS 571).